Here is a 279-residue protein sequence, read N- to C-terminus: Acetylglutamate kinase (279 aa).

Residues 62-63 (GG), Arg-84, and Asn-177 contribute to the substrate site.

Belongs to the acetylglutamate kinase family. ArgB subfamily.

Its subcellular location is the cytoplasm. The enzyme catalyses N-acetyl-L-glutamate + ATP = N-acetyl-L-glutamyl 5-phosphate + ADP. It functions in the pathway amino-acid biosynthesis; L-arginine biosynthesis; N(2)-acetyl-L-ornithine from L-glutamate: step 2/4. Its function is as follows. Catalyzes the ATP-dependent phosphorylation of N-acetyl-L-glutamate. This chain is Acetylglutamate kinase, found in Pseudothermotoga lettingae (strain ATCC BAA-301 / DSM 14385 / NBRC 107922 / TMO) (Thermotoga lettingae).